A 362-amino-acid polypeptide reads, in one-letter code: RING-H2 finger protein ATL52 (362 aa).

The helical transmembrane segment at 58–78 (LIALIGILTSALILVSYYTLI) threads the bilayer. An RING-type; atypical zinc finger spans residues 142 to 184 (CSVCLSEFEENESLRLLPKCNHAFHLPCIDTWLKSHSNCPLCR). Disordered stretches follow at residues 252 to 271 (DARS…DEDS) and 296 to 333 (EDEE…RSGG). Residues 309–319 (QRREEGEDGDG) are compositionally biased toward basic and acidic residues.

The protein belongs to the RING-type zinc finger family. ATL subfamily. Expressed in flowers.

It is found in the membrane. The catalysed reaction is S-ubiquitinyl-[E2 ubiquitin-conjugating enzyme]-L-cysteine + [acceptor protein]-L-lysine = [E2 ubiquitin-conjugating enzyme]-L-cysteine + N(6)-ubiquitinyl-[acceptor protein]-L-lysine.. Its pathway is protein modification; protein ubiquitination. This Arabidopsis thaliana (Mouse-ear cress) protein is RING-H2 finger protein ATL52 (ATL52).